Here is a 104-residue protein sequence, read N- to C-terminus: uncharacterized protein (104 aa).

Disordered stretches follow at residues 1–20 (MTET…TTRK) and 83–104 (TASA…VAKK). Low complexity predominate over residues 83 to 93 (TASASSSGKKV). Over residues 94–104 (VASKKKVVAKK) the composition is skewed to basic residues.

This is an uncharacterized protein from Dictyostelium discoideum (Social amoeba).